A 120-amino-acid chain; its full sequence is Large ribosomal subunit protein bL19 (120 aa).

Belongs to the bacterial ribosomal protein bL19 family.

In terms of biological role, this protein is located at the 30S-50S ribosomal subunit interface and may play a role in the structure and function of the aminoacyl-tRNA binding site. The polypeptide is Large ribosomal subunit protein bL19 (Dichelobacter nodosus (strain VCS1703A)).